The following is a 166-amino-acid chain: Large ribosomal subunit protein uL10 (166 aa).

In terms of assembly, part of the ribosomal stalk of the 50S ribosomal subunit. The N-terminus interacts with L11 and 23S rRNA to form the base of the stalk. The C-terminus forms an elongated spine to which L12 dimers bind in a sequential fashion forming a pentameric L10(L12)2(L12)2 complex.

Its function is as follows. Forms part of the ribosomal stalk, playing a central role in the interaction of the ribosome with GTP-bound translation factors (such as IF-2, EF-Tu, EF-G and RF3). The protein is Large ribosomal subunit protein uL10 (rplJ) of Bacillus subtilis (strain 168).